The following is a 770-amino-acid chain: ATP-dependent RNA helicase HCA4 (770 aa).

Residues 41 to 69 (KFFKDLPISDPTLKGLRESSFIKLTEIQA) carry the Q motif motif. The Helicase ATP-binding domain occupies 72 to 246 (IPVSLQGHDV…RLSLTDYKTV (175 aa)). ATP is bound at residue 85–92 (AKTGSGKT). The DEAD box motif lies at 194-197 (DEAD). The Helicase C-terminal domain maps to 278–437 (KLDILFSFIK…SIKPQLQSLL (160 aa)). Phosphoserine is present on residues serine 692, serine 710, serine 714, and serine 743. The tract at residues 705-724 (GTGNLSDDMSDGDMPDSEGH) is disordered.

It belongs to the DEAD box helicase family. DDX10/DBP4 subfamily. Interacts with the U3 and U14 snoRNAs. Associates with pre-ribosomal complexes.

The protein localises to the nucleus. It is found in the nucleolus. The catalysed reaction is ATP + H2O = ADP + phosphate + H(+). Functionally, ATP-dependent RNA helicase required for ribosome biogenesis. Involved in the release of U14 snoRNA in pre-ribosomal complexes. Required for pre-rRNA cleavage at site A2. The polypeptide is ATP-dependent RNA helicase HCA4 (HCA4) (Saccharomyces cerevisiae (strain ATCC 204508 / S288c) (Baker's yeast)).